A 449-amino-acid polypeptide reads, in one-letter code: Glutamyl-tRNA reductase (449 aa).

Substrate contacts are provided by residues 58-61, serine 121, 126-128, and glutamine 132; these read TCNR and ETQ. Residue cysteine 59 is the Nucleophile of the active site. An NADP(+)-binding site is contributed by 203 to 208; the sequence is GLGEMA.

This sequence belongs to the glutamyl-tRNA reductase family. Homodimer.

It carries out the reaction (S)-4-amino-5-oxopentanoate + tRNA(Glu) + NADP(+) = L-glutamyl-tRNA(Glu) + NADPH + H(+). It participates in porphyrin-containing compound metabolism; protoporphyrin-IX biosynthesis; 5-aminolevulinate from L-glutamyl-tRNA(Glu): step 1/2. Functionally, catalyzes the NADPH-dependent reduction of glutamyl-tRNA(Glu) to glutamate 1-semialdehyde (GSA). This Helicobacter pylori (strain J99 / ATCC 700824) (Campylobacter pylori J99) protein is Glutamyl-tRNA reductase.